A 406-amino-acid chain; its full sequence is MLINFEKVLSLALLAGSVSGRKHVPRGFVTTSGMKFQLDGKDFYFAGSNAYYFPFNDNQTDVELGLAAAKQAGLTVFRTWGFNDKNATYIEGGLPAYGGEGAGTTEVVFQRWANGTSTIDLEPFDKVVNAAKNTGMKLVVALTNNWADYGGMDVYTINLGGQYHDDFYRLPAIKKAYKRYVKEMVTRYRDSPAIMAWELANEPRCGADGVRNLPRSADGCNPEVLTAWIDEMSTYIKKLDPHHLVTWGGEGGFNIESDDWAYNGADGGDFDNELALPNIDFGVFHSYPDWWSKTVSWTNQWIRDHAAAMRTGRKPVVHEEYGWLTPEARLEYLGTVSNITRLEAVGGWQQISVSEKMSDMYWQYGYSGYSYGRNHNDGFTIYLDDPEAKELVYKHAKEVKKLNRRH.

A signal peptide spans 1–20; the sequence is MLINFEKVLSLALLAGSVSG. An N-linked (GlcNAc...) asparagine glycan is attached at asparagine 58. Tryptophan 80 lines the substrate pocket. N-linked (GlcNAc...) asparagine glycans are attached at residues asparagine 86 and asparagine 114. Residue asparagine 201 coordinates substrate. Residue glutamate 202 is the Proton donor of the active site. Tyrosine 287 is a substrate binding site. The active-site Nucleophile is the glutamate 320. N-linked (GlcNAc...) asparagine glycosylation occurs at asparagine 338. Tryptophan 362 serves as a coordination point for substrate.

It belongs to the glycosyl hydrolase 5 (cellulase A) family.

The protein resides in the secreted. The enzyme catalyses Random hydrolysis of (1-&gt;4)-beta-D-mannosidic linkages in mannans, galactomannans and glucomannans.. Endo-1,4-mannanase, a crucial enzyme for depolymerization of seed galactomannans and wood galactoglucomannans. In Aspergillus terreus (strain NIH 2624 / FGSC A1156), this protein is Probable mannan endo-1,4-beta-mannosidase C (manC).